A 115-amino-acid chain; its full sequence is T cell receptor beta variable 7-7 (115 aa).

Positions 1 to 21 (MGTSLLCWVVLGFLGTDHTGA) are cleaved as a signal peptide. Residues 22–115 (GVSQSPRYKV…SAMYRCASSL (94 aa)) form the Ig-like domain. The cysteines at positions 42 and 111 are disulfide-linked.

Alpha-beta TR is a heterodimer composed of an alpha and beta chain; disulfide-linked. The alpha-beta TR is associated with the transmembrane signaling CD3 coreceptor proteins to form the TR-CD3 (TcR or TCR). The assembly of alpha-beta TR heterodimers with CD3 occurs in the endoplasmic reticulum where a single alpha-beta TR heterodimer associates with one CD3D-CD3E heterodimer, one CD3G-CD3E heterodimer and one CD247 homodimer forming a stable octameric structure. CD3D-CD3E and CD3G-CD3E heterodimers preferentially associate with TR alpha and TR beta chains, respectively. The association of the CD247 homodimer is the last step of TcR assembly in the endoplasmic reticulum and is required for transport to the cell surface.

It is found in the cell membrane. In terms of biological role, v region of the variable domain of T cell receptor (TR) beta chain that participates in the antigen recognition. Alpha-beta T cell receptors are antigen specific receptors which are essential to the immune response and are present on the cell surface of T lymphocytes. Recognize peptide-major histocompatibility (MH) (pMH) complexes that are displayed by antigen presenting cells (APC), a prerequisite for efficient T cell adaptive immunity against pathogens. Binding of alpha-beta TR to pMH complex initiates TR-CD3 clustering on the cell surface and intracellular activation of LCK that phosphorylates the ITAM motifs of CD3G, CD3D, CD3E and CD247 enabling the recruitment of ZAP70. In turn ZAP70 phosphorylates LAT, which recruits numerous signaling molecules to form the LAT signalosome. The LAT signalosome propagates signal branching to three major signaling pathways, the calcium, the mitogen-activated protein kinase (MAPK) kinase and the nuclear factor NF-kappa-B (NF-kB) pathways, leading to the mobilization of transcription factors that are critical for gene expression and essential for T cell growth and differentiation. The T cell repertoire is generated in the thymus, by V-(D)-J rearrangement. This repertoire is then shaped by intrathymic selection events to generate a peripheral T cell pool of self-MH restricted, non-autoaggressive T cells. Post-thymic interaction of alpha-beta TR with the pMH complexes shapes TR structural and functional avidity. This is T cell receptor beta variable 7-7 from Homo sapiens (Human).